Reading from the N-terminus, the 98-residue chain is Co-chaperonin GroES (98 aa).

This sequence belongs to the GroES chaperonin family. In terms of assembly, heptamer of 7 subunits arranged in a ring. Interacts with the chaperonin GroEL.

Its subcellular location is the cytoplasm. Its function is as follows. Together with the chaperonin GroEL, plays an essential role in assisting protein folding. The GroEL-GroES system forms a nano-cage that allows encapsulation of the non-native substrate proteins and provides a physical environment optimized to promote and accelerate protein folding. GroES binds to the apical surface of the GroEL ring, thereby capping the opening of the GroEL channel. The sequence is that of Co-chaperonin GroES from Coprothermobacter proteolyticus (strain ATCC 35245 / DSM 5265 / OCM 4 / BT).